Reading from the N-terminus, the 465-residue chain is Cysteine--tRNA ligase (465 aa).

Cys30 contacts Zn(2+). A 'HIGH' region motif is present at residues 32-42 (ITVYDYCHVGH). 3 residues coordinate Zn(2+): Cys214, His239, and Glu243. A 'KMSKS' region motif is present at residues 271-275 (KMSKS). Lys274 is a binding site for ATP.

This sequence belongs to the class-I aminoacyl-tRNA synthetase family. Monomer. Zn(2+) serves as cofactor.

The protein resides in the cytoplasm. It catalyses the reaction tRNA(Cys) + L-cysteine + ATP = L-cysteinyl-tRNA(Cys) + AMP + diphosphate. The sequence is that of Cysteine--tRNA ligase from Burkholderia orbicola (strain MC0-3).